The primary structure comprises 1009 residues: Protein-tyrosine kinase 2-beta (1009 aa).

In terms of domain architecture, FERM spans 39–359 (RILKVCFYSN…GYCRLQGEHK (321 aa)). Phosphoserine occurs at positions 361, 375, and 399. Phosphotyrosine; by autocatalysis is present on Y402. One can recognise a Protein kinase domain in the interval 425–683 (VVLNRILGEG…ELVCSLSDIY (259 aa)). ATP contacts are provided by residues 431-439 (LGEGFFGEV), K457, and 503-509 (ELYPYGE). D549 (proton acceptor) is an active-site residue. Y579 is subject to Phosphotyrosine. Y580 carries the phosphotyrosine; by SRC, FYN and LCK modification. The interval 696–728 (NARYRPPKILEPTTFQEPPPKPSRPKYRPPPQT) is disordered. Residues 712-727 (EPPPKPSRPKYRPPPQ) show a composition bias toward pro residues. Phosphotyrosine is present on Y722. Position 762 is a phosphoserine (S762). T765 bears the Phosphothreonine mark. The tract at residues 801–1009 (KIKMKQVLER…VANLAHPPAE (209 aa)) is interaction with TGFB1I1. Y834 carries the post-translational modification Phosphotyrosine. S839 is modified (phosphoserine). Position 842 is a phosphothreonine (T842). Residue Y849 is modified to Phosphotyrosine. A Phosphoserine modification is found at S866. The focal adhesion targeting (FAT) stretch occupies residues 868-1009 (QPTANLDRTD…VANLAHPPAE (142 aa)). The residue at position 881 (Y881) is a Phosphotyrosine.

It belongs to the protein kinase superfamily. Tyr protein kinase family. FAK subfamily. Homodimer, or homooligomer. Interacts with KCNA2. Interacts with NPHP1, ASAP1, ASAP2, ARHGAP26, SKAP2 and TGFB1I1. The Tyr-402 phosphorylated form interacts with SRC (via SH2 domain) and SRC family members. Forms a signaling complex with EPHA1, LCK and phosphatidylinositol 3-kinase; upon activation by EFNA1. Interacts with GRB2 (via SH2 domain). Interacts with P53/TP53 and MDM2. Interacts with MYLK. Interacts with BCAR1. Interacts with RB1CC1. Interacts with RHOU. Interacts with VAV1. Interacts with PDPK1. Interacts with DLG4. Interacts with LPXN and PTPN12. Interacts with SIRPA and SH2D3C. Interacts (hypophosphorylated) with PXN. Interacts with ARHGAP10. Phosphorylated on tyrosine residues in response to various stimuli that elevate the intracellular calcium concentration; this activation is indirect and may be mediated by production of reactive oxygen species (ROS). Tyr-402 is the major autophosphorylation site, but other kinases can also phosphorylate Tyr-402. Autophosphorylation occurs in trans, i.e. one subunit of the dimeric receptor phosphorylates tyrosine residues on the other subunit. Phosphorylation at Tyr-402 promotes interaction with SRC and SRC family members, leading to phosphorylation at Tyr-579; Tyr-580 and Tyr-881. Phosphorylation at Tyr-881 is important for interaction with GRB2. Phosphorylated on tyrosine residues upon activation of FGR and PKC. Recruitment by NPHP1 to cell matrix adhesions initiates Tyr-402 phosphorylation. In monocytes, adherence to substrata is required for tyrosine phosphorylation and kinase activation. Angiotensin II, thapsigargin and L-alpha-lysophosphatidic acid (LPA) also induce autophosphorylation and increase kinase activity. Phosphorylation by MYLK promotes ITGB2 activation and is thus essential to trigger neutrophil transmigration during lung injury. Dephosphorylated by PTPN12.

Its subcellular location is the cytoplasm. It localises to the perinuclear region. The protein resides in the cell membrane. The protein localises to the cell junction. It is found in the focal adhesion. Its subcellular location is the cell projection. It localises to the lamellipodium. The protein resides in the cell cortex. The protein localises to the nucleus. The catalysed reaction is L-tyrosyl-[protein] + ATP = O-phospho-L-tyrosyl-[protein] + ADP + H(+). With respect to regulation, activated in response to stimuli that lead to increased intracellular Ca(2+) levels; this activation is indirect and may be mediated by calcium-mediated production of reactive oxygen species (ROS). Activated by autophosphorylation at Tyr-402; this creates a binding site for SRC family kinases and leads to phosphorylation at additional tyrosine residues. Phosphorylation at Tyr-402, Tyr-579 and Tyr-580 is required for optimal kinase activity. In terms of biological role, non-receptor protein-tyrosine kinase that regulates reorganization of the actin cytoskeleton, cell polarization, cell migration, adhesion, spreading and bone remodeling. Plays a role in the regulation of the humoral immune response, and is required for normal levels of marginal B-cells in the spleen and normal migration of splenic B-cells. Required for normal macrophage polarization and migration towards sites of inflammation. Regulates cytoskeleton rearrangement and cell spreading in T-cells, and contributes to the regulation of T-cell responses. Promotes osteoclastic bone resorption; this requires both PTK2B/PYK2 and SRC. May inhibit differentiation and activity of osteoprogenitor cells. Functions in signaling downstream of integrin and collagen receptors, immune receptors, G-protein coupled receptors (GPCR), cytokine, chemokine and growth factor receptors, and mediates responses to cellular stress. Forms multisubunit signaling complexes with SRC and SRC family members upon activation; this leads to the phosphorylation of additional tyrosine residues, creating binding sites for scaffold proteins, effectors and substrates. Regulates numerous signaling pathways. Promotes activation of phosphatidylinositol 3-kinase and of the AKT1 signaling cascade. Promotes activation of NOS3. Regulates production of the cellular messenger cGMP. Promotes activation of the MAP kinase signaling cascade, including activation of MAPK1/ERK2, MAPK3/ERK1 and MAPK8/JNK1. Promotes activation of Rho family GTPases, such as RHOA and RAC1. Recruits the ubiquitin ligase MDM2 to P53/TP53 in the nucleus, and thereby regulates P53/TP53 activity, P53/TP53 ubiquitination and proteasomal degradation. Acts as a scaffold, binding to both PDPK1 and SRC, thereby allowing SRC to phosphorylate PDPK1 at 'Tyr-9, 'Tyr-373', and 'Tyr-376'. Promotes phosphorylation of NMDA receptors by SRC family members, and thereby contributes to the regulation of NMDA receptor ion channel activity and intracellular Ca(2+) levels. May also regulate potassium ion transport by phosphorylation of potassium channel subunits. Phosphorylates SRC; this increases SRC kinase activity. Phosphorylates ASAP1, NPHP1, KCNA2 and SHC1. Promotes phosphorylation of ASAP2, RHOU and PXN; this requires both SRC and PTK2/PYK2. The protein is Protein-tyrosine kinase 2-beta (Ptk2b) of Mus musculus (Mouse).